Reading from the N-terminus, the 315-residue chain is MTHQDLSITAKLINGGVAGLVGVTCVFPIDLAKTRLQNQHGKAMYKGMIDCLMKTARAEGFFGMYRGAAVNLTLVTPEKAIKLAANDFFRRLLMEDGMQRNLKMEMLAGCGAGMCQVVVTCPMEMLKIQLQDAGRLAVHHQGSASAPSTSRSYTTGSASTHRRPSATLIAWELLRTQGLAGLYRGLGATLLRDIPFSIIYFPLFANLNNLGFNELAGKASFAHSFVSGCVAGSIAAVAVTPLDVLKTRIQTLKKGLGEDMYSGITDCARKLWIQEGPSAFMKGAGCRALVIAPLFGIAQGVYFIGIGERILKCFD.

Solcar repeat units lie at residues 6–92 (LSIT…FRRL), 100–210 (RNLK…LNNL), and 219–308 (ASFA…GIGE). A run of 3 helical transmembrane segments spans residues 12–32 (LINGGVAGLVGVTCVFPIDLA), 61–81 (FFGMYRGAAVNLTLVTPEKAI), and 106–126 (MLAGCGAGMCQVVVTCPMEML). A disordered region spans residues 141 to 160 (QGSASAPSTSRSYTTGSAST). Positions 142–159 (GSASAPSTSRSYTTGSAS) are enriched in polar residues. The residue at position 145 (S145) is a Phosphoserine. The next 3 helical transmembrane spans lie at 185-205 (GLGATLLRDIPFSIIYFPLFA), 225-245 (FVSGCVAGSIAAVAVTPLDVL), and 288-308 (ALVIAPLFGIAQGVYFIGIGE).

It belongs to the mitochondrial carrier (TC 2.A.29) family. Expressed in brain, to a lesser extent in testis, and poorly in all the other tissues.

It localises to the mitochondrion inner membrane. It catalyses the reaction L-glutamate(in) + H(+)(in) = L-glutamate(out) + H(+)(out). Functionally, responsible for the transport of glutamate from the cytosol into the mitochondrial matrix with the concomitant import of a proton (symport system). The chain is Mitochondrial glutamate carrier 2 from Homo sapiens (Human).